Reading from the N-terminus, the 266-residue chain is tRNA pseudouridine synthase A (266 aa).

Catalysis depends on D57, which acts as the Nucleophile. Position 115 (Y115) interacts with substrate.

It belongs to the tRNA pseudouridine synthase TruA family. As to quaternary structure, homodimer.

The catalysed reaction is uridine(38/39/40) in tRNA = pseudouridine(38/39/40) in tRNA. Its function is as follows. Formation of pseudouridine at positions 38, 39 and 40 in the anticodon stem and loop of transfer RNAs. This is tRNA pseudouridine synthase A from Buchnera aphidicola subsp. Acyrthosiphon pisum (strain APS) (Acyrthosiphon pisum symbiotic bacterium).